The primary structure comprises 277 residues: Probable septum site-determining protein MinC (277 aa).

Residues T107–D168 are disordered. Positions G122–A142 are enriched in basic and acidic residues.

Belongs to the MinC family. In terms of assembly, interacts with MinD and FtsZ.

Functionally, cell division inhibitor that blocks the formation of polar Z ring septums. Rapidly oscillates between the poles of the cell to destabilize FtsZ filaments that have formed before they mature into polar Z rings. Prevents FtsZ polymerization. In Mesorhizobium japonicum (strain LMG 29417 / CECT 9101 / MAFF 303099) (Mesorhizobium loti (strain MAFF 303099)), this protein is Probable septum site-determining protein MinC.